A 278-amino-acid polypeptide reads, in one-letter code: Large ribosomal subunit protein uL2 (278 aa).

Residues 214 to 278 (WLGKRPHNRG…IMRSRHQRKS (65 aa)) form a disordered region.

Belongs to the universal ribosomal protein uL2 family. In terms of assembly, part of the 50S ribosomal subunit. Forms a bridge to the 30S subunit in the 70S ribosome.

Its function is as follows. One of the primary rRNA binding proteins. Required for association of the 30S and 50S subunits to form the 70S ribosome, for tRNA binding and peptide bond formation. It has been suggested to have peptidyltransferase activity; this is somewhat controversial. Makes several contacts with the 16S rRNA in the 70S ribosome. The polypeptide is Large ribosomal subunit protein uL2 (Chelativorans sp. (strain BNC1)).